The sequence spans 1048 residues: Probable inactive receptor kinase At5g10020 (1048 aa).

The N-terminal stretch at 1–21 (MSHFLTFCFLSLLLLLHGANA) is a signal peptide. 18 LRR repeats span residues 100-120 (RLRN…PSLG), 124-146 (SLQH…ISEL), 148-169 (SLNH…GFRN), 172-194 (QLRS…FTEL), 196-217 (NVEF…PMEN), 224-246 (TLRH…ESIG), 250-272 (NLEI…GSQP), 273-294 (SLRI…ELLQ), 298-319 (PLLE…INSS), 320-342 (TLTM…FKSC), 365-387 (TPDV…TSAF), 389-411 (RLSV…WGDS), 412-433 (QFSV…SFFT), 436-457 (SLRS…RGSR), 469-491 (QMEL…IGTM), 493-516 (KIKV…NKLS), 517-539 (GLLF…LPSQ), and 540-560 (MVGF…DLRS). A helical membrane pass occupies residues 602–622 (IAIIVASVGAAIMILFVLFAY). Positions 696–733 (EQGAPATSAPTNLLDDYPAASGRKSSSGGSPLSSSPRF) are disordered. Over residues 716-733 (SGRKSSSGGSPLSSSPRF) the composition is skewed to low complexity. A Phosphoserine modification is found at S744. A Protein kinase domain is found at 768 to 1045 (RAPAEVLGRS…IRQVLDHLTS (278 aa)). ATP is bound by residues 774-782 (LGRSSHGTL) and K796.

Belongs to the protein kinase superfamily.

The protein localises to the membrane. This chain is Probable inactive receptor kinase At5g10020, found in Arabidopsis thaliana (Mouse-ear cress).